A 1202-amino-acid chain; its full sequence is Phospholipid-transporting ATPase 10 (1202 aa).

Residues 1-73 (MAGPSRRRRR…STKYTVASFF (73 aa)) are Cytoplasmic-facing. A helical membrane pass occupies residues 74–95 (PKSLFEQFRRVANFYFLVTGIL). The Extracellular portion of the chain corresponds to 96 to 99 (SLTD). Residues 100-122 (LSPYGAVSALLPLALVISATMVK) traverse the membrane as a helical segment. At 123–305 (EGIEDWRRKQ…SRIERTMDKI (183 aa)) the chain is on the cytoplasmic side. Residues 306–327 (IYLMFGLVFLMSFVGSIIFGVE) traverse the membrane as a helical segment. The Extracellular segment spans residues 328 to 364 (TREDKVKNGRTERWYLKPDDADIFFDPERAPMAAIYH). A helical membrane pass occupies residues 365 to 382 (FFTATMLYSYFIPISLYV). Residues 383-920 (SIEIVKVLQS…HGHWCYSRIA (538 aa)) are Cytoplasmic-facing. Residue Asp-430 is the 4-aspartylphosphate intermediate of the active site. Mg(2+) contacts are provided by Asp-865 and Asp-869. Residues 921–940 (SMICYFFYKNITFGVTVFLY) form a helical membrane-spanning segment. Residues 941–954 (EAYTSFSGQPAYND) are Extracellular-facing. The chain crosses the membrane as a helical span at residues 955-974 (WFLSLFNVFFSSLPVIALGV). The Cytoplasmic segment spans residues 975–1004 (FDQDVSARFCYKFPLLYQEGVQNILFSWKR). A helical membrane pass occupies residues 1005–1027 (IIGWMFNGFISALAIFFLCKESL). Over 1028–1040 (KHQLFDPDGKTAG) the chain is Extracellular. Residues 1041-1063 (REILGGTMYTCVVWVVNLQMALS) form a helical membrane-spanning segment. Topologically, residues 1064–1069 (ISYFTW) are cytoplasmic. Residues 1070–1090 (VQHIVIWGSIAFWYIFLMIYG) form a helical membrane-spanning segment. The Extracellular segment spans residues 1091–1107 (AMTPSFSTDAYMVFLEA). The helical transmembrane segment at 1108-1132 (LAPAPSYWLTTLFVMIFALIPYFVY) threads the bilayer. Over 1133-1202 (KSVQMRFFPK…DQIYKDLVGV (70 aa)) the chain is Cytoplasmic.

Belongs to the cation transport ATPase (P-type) (TC 3.A.3) family. Type IV subfamily.

It localises to the cell membrane. It catalyses the reaction ATP + H2O + phospholipidSide 1 = ADP + phosphate + phospholipidSide 2.. Functionally, involved in transport of phospholipids. The chain is Phospholipid-transporting ATPase 10 from Arabidopsis thaliana (Mouse-ear cress).